Here is a 201-residue protein sequence, read N- to C-terminus: CASP-like protein 2B2 (201 aa).

Topologically, residues Met-1–Arg-28 are cytoplasmic. Residues Val-29 to Ile-49 form a helical membrane-spanning segment. The Extracellular portion of the chain corresponds to Ala-50–Lys-71. The chain crosses the membrane as a helical span at residues Ala-72 to Val-92. Residues Arg-93–Pro-108 are Cytoplasmic-facing. Residues Leu-109–Ala-129 traverse the membrane as a helical segment. The Extracellular portion of the chain corresponds to Ala-130–Ala-166. The helical transmembrane segment at Ser-167–Phe-187 threads the bilayer. Residues Arg-188–Trp-201 lie on the Cytoplasmic side of the membrane.

The protein belongs to the Casparian strip membrane proteins (CASP) family. In terms of assembly, homodimer and heterodimers.

The protein resides in the cell membrane. This chain is CASP-like protein 2B2, found in Arabidopsis thaliana (Mouse-ear cress).